Here is a 1158-residue protein sequence, read N- to C-terminus: Phospholipid-transporting ATPase 1 (1158 aa).

Residues methionine 1–proline 15 are compositionally biased toward basic and acidic residues. Positions methionine 1–asparagine 30 are disordered. Topologically, residues methionine 1–leucine 100 are cytoplasmic. A helical membrane pass occupies residues proline 101 to leucine 122. Residues asparagine 123 to glutamine 127 lie on the Extracellular side of the membrane. Residues leucine 128–lysine 150 form a helical membrane-spanning segment. The Cytoplasmic segment spans residues aspartate 151 to glutamate 329. Residues isoleucine 330–tryptophan 351 form a helical membrane-spanning segment. The Extracellular segment spans residues leucine 352 to threonine 391. The chain crosses the membrane as a helical span at residues phenylalanine 392 to isoleucine 409. The Cytoplasmic segment spans residues serine 410–glycine 914. Aspartate 457 functions as the 4-aspartylphosphate intermediate in the catalytic mechanism. Mg(2+) is bound by residues aspartate 859 and aspartate 863. The chain crosses the membrane as a helical span at residues tyrosine 915–tyrosine 934. The Extracellular segment spans residues valine 935–glutamate 948. A helical transmembrane segment spans residues tryptophan 949–isoleucine 968. Residues leucine 969–leucine 998 lie on the Cytoplasmic side of the membrane. The helical transmembrane segment at phenylalanine 999–alanine 1020 threads the bilayer. Topologically, residues tyrosine 1021–aspartate 1027 are extracellular. A helical membrane pass occupies residues threonine 1028–aspartate 1050. The Cytoplasmic segment spans residues valine 1051 to tryptophan 1056. A helical transmembrane segment spans residues isoleucine 1057 to aspartate 1077. Residues valine 1078 to glutamine 1090 are Extracellular-facing. A helical transmembrane segment spans residues valine 1091–isoleucine 1115. Over lysine 1116–arginine 1158 the chain is Cytoplasmic.

This sequence belongs to the cation transport ATPase (P-type) (TC 3.A.3) family. Type IV subfamily. Expressed in roots, flowers, anthers, leaves, vascular tissues and stems.

It localises to the endoplasmic reticulum membrane. It is found in the cell membrane. It catalyses the reaction ATP + H2O + phospholipidSide 1 = ADP + phosphate + phospholipidSide 2.. Its function is as follows. Involved in transport of phospholipids. Contributes to transmembrane flipping of lipids. Has activity with phosphatidylserine and with a much lower efficiency with phosphatidylethanolamine, but not with phosphatidylcholine. In Arabidopsis thaliana (Mouse-ear cress), this protein is Phospholipid-transporting ATPase 1.